A 640-amino-acid chain; its full sequence is uncharacterized protein (640 aa).

The TIR domain maps to 184–328 (VKRDTIFIIK…KVQRSIDTMI (145 aa)). Residues 613 to 640 (LPNDLDDEDEELDDSTLGRPDSDEEGGE) form a disordered region. Residues 616–626 (DLDDEDEELDD) show a composition bias toward acidic residues.

This is an uncharacterized protein from Sinorhizobium fredii (strain NBRC 101917 / NGR234).